The primary structure comprises 167 residues: MPGNRPHYGRWPQHDFPPFKKLRPQSVTSRIQPGSDVIVCAEMDEQWGYVGAKSRQRWLFYAYDRLRKTVVAHVFGERTMATLGRLMSLLSPFDVVIWMTDGWPLYESRLKGKLHVISKRYTQRIERHNLNLRQHLARLGRKSLSFSKSVEQHDKVIGHYLNIKHYQ.

This sequence belongs to the transposase 27 family.

Absolutely required for transposition of IS1. The chain is Insertion element IS1 2 protein InsB (insB2) from Escherichia coli (strain K12).